We begin with the raw amino-acid sequence, 435 residues long: Serine/threonine-protein kinase 40 (435 aa).

The Protein kinase domain occupies 35–332 (FVLGPRLGNS…DVLEALSAII (298 aa)). Residues 41–49 (LGNSPVPSI) and Lys-66 contribute to the ATP site. Asp-197 acts as the Proton acceptor in catalysis.

This sequence belongs to the protein kinase superfamily. CAMK Ser/Thr protein kinase family.

The protein localises to the nucleus. The protein resides in the cytoplasm. The enzyme catalyses L-seryl-[protein] + ATP = O-phospho-L-seryl-[protein] + ADP + H(+). It catalyses the reaction L-threonyl-[protein] + ATP = O-phospho-L-threonyl-[protein] + ADP + H(+). Its function is as follows. May be a negative regulator of NF-kappa-B and p53-mediated gene transcription. The protein is Serine/threonine-protein kinase 40 (Stk40) of Mus musculus (Mouse).